Reading from the N-terminus, the 186-residue chain is DNA damage up-regulated protein (186 aa).

A disordered region spans residues 147–166; sequence ATENGEGCRPARDPASSPSS.

In terms of assembly, interacts with DNA damage response proteins ATR, H2AX, PCNA, RAD18 and RAD51C. Forms a complex with H2AX and RAD18 following DDUP phosphorylation. Phosphorylated in an ATR-dependent manner; phosphorylation is required for interaction with H2AX and RAD18 and for DDUP-mediated DNA damage repair.

It localises to the nucleus. The protein localises to the chromosome. Its function is as follows. Promotes DNA damage repair through both homologous recombination repair (HRR) and post-replication repair (PRR) mechanisms. Enhances the retention of DNA damage response protein RAD18 at sites of DNA damage. This allows for HRR via association of RAD18 with RAD51C and for PRR via RAD18-mediated promotion of PCNA monoubiquitination. In Homo sapiens (Human), this protein is DNA damage up-regulated protein.